A 181-amino-acid chain; its full sequence is Bifunctional adenosylcobalamin biosynthesis protein CobU (181 aa).

GTP-binding positions include 7-14 (GGARSGKS) and 31-33 (ATS). The active-site GMP-histidine intermediate is histidine 47. GTP contacts are provided by residues 48 to 51 (RQGR), glutamate 59, and glutamate 81.

It belongs to the CobU/CobP family. As to quaternary structure, homodimer.

It catalyses the reaction adenosylcob(III)inamide + GTP = adenosylcob(III)inamide phosphate + GDP + H(+). The enzyme catalyses adenosylcob(III)inamide + ATP = adenosylcob(III)inamide phosphate + ADP + H(+). It carries out the reaction adenosylcob(III)inamide phosphate + GTP + H(+) = adenosylcob(III)inamide-GDP + diphosphate. Its pathway is cofactor biosynthesis; adenosylcobalamin biosynthesis; adenosylcobalamin from cob(II)yrinate a,c-diamide: step 5/7. It functions in the pathway cofactor biosynthesis; adenosylcobalamin biosynthesis; adenosylcobalamin from cob(II)yrinate a,c-diamide: step 6/7. In terms of biological role, catalyzes ATP-dependent phosphorylation of adenosylcobinamide and addition of GMP to adenosylcobinamide phosphate. The sequence is that of Bifunctional adenosylcobalamin biosynthesis protein CobU (cobU) from Escherichia coli (strain K12).